Reading from the N-terminus, the 153-residue chain is Glutamyl-tRNA(Gln) amidotransferase subunit C, mitochondrial (153 aa).

The disordered stretch occupies residues 31–55 (HPTKVPQQPEPNAFPDLDNNTDDDP).

The protein belongs to the GatC family. In terms of assembly, subunit of the heterotrimeric GatCAB amidotransferase (AdT) complex, composed of A, B and C subunits.

The protein localises to the mitochondrion. The catalysed reaction is L-glutamyl-tRNA(Gln) + L-glutamine + ATP + H2O = L-glutaminyl-tRNA(Gln) + L-glutamate + ADP + phosphate + H(+). Functionally, allows the formation of correctly charged Gln-tRNA(Gln) through the transamidation of misacylated Glu-tRNA(Gln) in the mitochondria. The reaction takes place in the presence of glutamine and ATP through an activated gamma-phospho-Glu-tRNA(Gln). The polypeptide is Glutamyl-tRNA(Gln) amidotransferase subunit C, mitochondrial (Drosophila willistoni (Fruit fly)).